A 499-amino-acid polypeptide reads, in one-letter code: MIKRALISVFDKTGILDLAKFLESRDVEIISTGGTYKHLKENGVKVIDIEEVTGFPEMLDGRVKTLNPLIHGGILAIRDNEEHMKVIEEKGINPIDMVVVNLYPFFNKVEENLSFDEKVEFIDIGGPTMIRAAAKNFKDVVVLTDTKDYENVIDEIKENDQVNIKTRKKLAGKVFNLMSAYDAAISNFLLEEEYPEYLTLSYKKNIDLRYGENPHQTAAYYTSTVGKYPMKNFEKLNGKELSYNNIKDMDIAWKTVCEFEEVACCALKHNTPCGVAIGDTVQEVYTKAYECDLISIFGGIVAFNRKVDKETAENLAKIFLEIVVAPDFDEDALEVLKNKKNLRVIKCEEKSTEGKDMAKVDGGILVQKSDNKLLEDTKVVTEKSPTEQEMKDLIFGMKVVKYVKSNAIVVVKDGMAKGIGGGQVNRIWAAKEALDRAGDGVVLASDAFFPFGDVAEEAAKWGIKAIIQPGGSIRDEESIKVCNEKGISMVFTGIRHFKH.

The MGS-like domain occupies Met1–Thr144.

It belongs to the PurH family.

The catalysed reaction is (6R)-10-formyltetrahydrofolate + 5-amino-1-(5-phospho-beta-D-ribosyl)imidazole-4-carboxamide = 5-formamido-1-(5-phospho-D-ribosyl)imidazole-4-carboxamide + (6S)-5,6,7,8-tetrahydrofolate. It carries out the reaction IMP + H2O = 5-formamido-1-(5-phospho-D-ribosyl)imidazole-4-carboxamide. Its pathway is purine metabolism; IMP biosynthesis via de novo pathway; 5-formamido-1-(5-phospho-D-ribosyl)imidazole-4-carboxamide from 5-amino-1-(5-phospho-D-ribosyl)imidazole-4-carboxamide (10-formyl THF route): step 1/1. It participates in purine metabolism; IMP biosynthesis via de novo pathway; IMP from 5-formamido-1-(5-phospho-D-ribosyl)imidazole-4-carboxamide: step 1/1. The chain is Bifunctional purine biosynthesis protein PurH from Clostridium botulinum (strain Langeland / NCTC 10281 / Type F).